Reading from the N-terminus, the 314-residue chain is Methionyl-tRNA formyltransferase (314 aa).

110–113 (SLLP) is a (6S)-5,6,7,8-tetrahydrofolate binding site.

Belongs to the Fmt family.

The enzyme catalyses L-methionyl-tRNA(fMet) + (6R)-10-formyltetrahydrofolate = N-formyl-L-methionyl-tRNA(fMet) + (6S)-5,6,7,8-tetrahydrofolate + H(+). Functionally, attaches a formyl group to the free amino group of methionyl-tRNA(fMet). The formyl group appears to play a dual role in the initiator identity of N-formylmethionyl-tRNA by promoting its recognition by IF2 and preventing the misappropriation of this tRNA by the elongation apparatus. The chain is Methionyl-tRNA formyltransferase from Lactobacillus gasseri (strain ATCC 33323 / DSM 20243 / BCRC 14619 / CIP 102991 / JCM 1131 / KCTC 3163 / NCIMB 11718 / NCTC 13722 / AM63).